Reading from the N-terminus, the 130-residue chain is Small ribosomal subunit protein uS8 (130 aa).

Belongs to the universal ribosomal protein uS8 family. Part of the 30S ribosomal subunit.

Its function is as follows. One of the primary rRNA binding proteins, it binds directly to 16S rRNA central domain where it helps coordinate assembly of the platform of the 30S subunit. In Caldivirga maquilingensis (strain ATCC 700844 / DSM 13496 / JCM 10307 / IC-167), this protein is Small ribosomal subunit protein uS8.